Consider the following 229-residue polypeptide: Small ribosomal subunit protein uS3c (229 aa).

The KH type-2 domain maps to 39–128 (LRDNLFKQYP…RIILTILKVQ (90 aa)).

The protein belongs to the universal ribosomal protein uS3 family. In terms of assembly, part of the 30S ribosomal subunit.

Its subcellular location is the plastid. The protein localises to the chloroplast. This Tupiella akineta (Green alga) protein is Small ribosomal subunit protein uS3c (rps3).